Here is a 60-residue protein sequence, read N- to C-terminus: Photosystem II reaction center protein L (60 aa).

A helical transmembrane segment spans residues 39–59; the sequence is SLYWGLLLIFVLAVLFSSYIF.

The protein belongs to the PsbL family. As to quaternary structure, PSII is composed of 1 copy each of membrane proteins PsbA, PsbB, PsbC, PsbD, PsbE, PsbF, PsbH, PsbI, PsbJ, PsbK, PsbL, PsbM, PsbT, PsbX, PsbY, PsbZ, Psb30/Ycf12, at least 3 peripheral proteins of the oxygen-evolving complex and a large number of cofactors. It forms dimeric complexes.

Its subcellular location is the plastid. The protein resides in the chloroplast thylakoid membrane. Its function is as follows. One of the components of the core complex of photosystem II (PSII). PSII is a light-driven water:plastoquinone oxidoreductase that uses light energy to abstract electrons from H(2)O, generating O(2) and a proton gradient subsequently used for ATP formation. It consists of a core antenna complex that captures photons, and an electron transfer chain that converts photonic excitation into a charge separation. This subunit is found at the monomer-monomer interface and is required for correct PSII assembly and/or dimerization. This Oedogonium cardiacum (Filamentous green alga) protein is Photosystem II reaction center protein L.